The primary structure comprises 452 residues: Xaa-Pro dipeptidase 1 (452 aa).

Mn(2+) is bound by residues Asp-247, Asp-258, His-338, Glu-383, and Glu-422.

This sequence belongs to the peptidase M24B family. Bacterial-type prolidase subfamily. Mn(2+) is required as a cofactor.

The enzyme catalyses Xaa-L-Pro dipeptide + H2O = an L-alpha-amino acid + L-proline. In terms of biological role, splits dipeptides with a prolyl residue in the C-terminal position. This Idiomarina loihiensis (strain ATCC BAA-735 / DSM 15497 / L2-TR) protein is Xaa-Pro dipeptidase 1.